Consider the following 388-residue polypeptide: Chorismate synthase (388 aa).

Arg-39 and Arg-45 together coordinate NADP(+). FMN contacts are provided by residues 130–132 (RSS), 251–252 (NA), Gly-296, 311–315 (KPIPT), and Arg-337.

It belongs to the chorismate synthase family. Homotetramer. It depends on FMNH2 as a cofactor.

It catalyses the reaction 5-O-(1-carboxyvinyl)-3-phosphoshikimate = chorismate + phosphate. Its pathway is metabolic intermediate biosynthesis; chorismate biosynthesis; chorismate from D-erythrose 4-phosphate and phosphoenolpyruvate: step 7/7. Functionally, catalyzes the anti-1,4-elimination of the C-3 phosphate and the C-6 proR hydrogen from 5-enolpyruvylshikimate-3-phosphate (EPSP) to yield chorismate, which is the branch point compound that serves as the starting substrate for the three terminal pathways of aromatic amino acid biosynthesis. This reaction introduces a second double bond into the aromatic ring system. This Streptococcus pyogenes serotype M5 (strain Manfredo) protein is Chorismate synthase.